The chain runs to 187 residues: Protein canopy-1 (187 aa).

The N-terminal stretch at 1–24 (MSPWIKHICLVLVAAFMLVKTTES) is a signal peptide. The region spanning 28–181 (EALYCSACMA…EVSDHCKSSV (154 aa)) is the Saposin B-type domain. 3 cysteine pairs are disulfide-bonded: cysteine 32–cysteine 177, cysteine 35–cysteine 170, and cysteine 90–cysteine 143. The Prevents secretion from ER motif lies at 184 to 187 (HSEL).

The protein belongs to the canopy family. Homodimer. Interacts with fgfr1.

The protein resides in the endoplasmic reticulum. In terms of biological role, involved in the maintenance of the midbrain-hindbrain boundary (MHB) organizer. Contributes to a positive-feedback loop of FGF signaling in the MHB, enabling the MHB to exert its role as an organizer for the tectal and cerebellar development. The protein is Protein canopy-1 (cnpy1) of Danio rerio (Zebrafish).